The primary structure comprises 426 residues: N-formyl-4-amino-5-aminomethyl-2-methylpyrimidine deformylase (426 aa).

Residues 1-31 adopt a coiled-coil conformation; the sequence is MDQQIYSLQKKVEEHKEELIQLAKTLISYQT. Residue His-89 participates in Zn(2+) binding. The active site involves Asp-91. Asp-122 is a binding site for Zn(2+). Glu-156 functions as the Proton acceptor in the catalytic mechanism. Residues Glu-157, Asp-180, and His-394 each contribute to the Zn(2+) site.

Belongs to the peptidase M20A family. Zn(2+) is required as a cofactor. It depends on Co(2+) as a cofactor.

It carries out the reaction N-formyl-4-amino-5-aminomethyl-2-methylpyrimidine + H2O = 4-amino-5-aminomethyl-2-methylpyrimidine + formate. Its pathway is cofactor biosynthesis; thiamine diphosphate biosynthesis. Its function is as follows. Catalyzes the deformylation of the formylaminopyrimidine N-formyl-4-amino-5-aminomethyl-2-methylpyrimidine (FAMP) to give the corresponding aminopyrimidine. The sequence is that of N-formyl-4-amino-5-aminomethyl-2-methylpyrimidine deformylase from Bacillus subtilis (strain 168).